Here is a 273-residue protein sequence, read N- to C-terminus: Large ribosomal subunit protein uL2 (273 aa).

The interval 221–262 (RGTAMNPVDHPHGGGEGRNFGKHPVTPWGVQTKGKKTRHNKR) is disordered. Basic residues predominate over residues 253–262 (KGKKTRHNKR).

This sequence belongs to the universal ribosomal protein uL2 family. As to quaternary structure, part of the 50S ribosomal subunit. Forms a bridge to the 30S subunit in the 70S ribosome.

One of the primary rRNA binding proteins. Required for association of the 30S and 50S subunits to form the 70S ribosome, for tRNA binding and peptide bond formation. It has been suggested to have peptidyltransferase activity; this is somewhat controversial. Makes several contacts with the 16S rRNA in the 70S ribosome. The chain is Large ribosomal subunit protein uL2 from Haemophilus influenzae (strain ATCC 51907 / DSM 11121 / KW20 / Rd).